The following is a 102-amino-acid chain: Large ribosomal subunit protein bL21 (102 aa).

This sequence belongs to the bacterial ribosomal protein bL21 family. Part of the 50S ribosomal subunit. Contacts protein L20.

In terms of biological role, this protein binds to 23S rRNA in the presence of protein L20. This chain is Large ribosomal subunit protein bL21, found in Geobacter sp. (strain M21).